We begin with the raw amino-acid sequence, 241 residues long: DNA repair protein RecO (241 aa).

This sequence belongs to the RecO family.

Its function is as follows. Involved in DNA repair and RecF pathway recombination. This chain is DNA repair protein RecO, found in Rickettsia bellii (strain OSU 85-389).